The chain runs to 122 residues: Large ribosomal subunit protein uL14 (122 aa).

This sequence belongs to the universal ribosomal protein uL14 family. Part of the 50S ribosomal subunit. Forms a cluster with proteins L3 and L19. In the 70S ribosome, L14 and L19 interact and together make contacts with the 16S rRNA in bridges B5 and B8.

Binds to 23S rRNA. Forms part of two intersubunit bridges in the 70S ribosome. The polypeptide is Large ribosomal subunit protein uL14 (Streptococcus pyogenes serotype M2 (strain MGAS10270)).